Here is a 760-residue protein sequence, read N- to C-terminus: Dipeptidyl peptidase 4 (760 aa).

Residues 1-6 (MKTPWK) are Cytoplasmic-facing. Residues 7–28 (VLLGLLGVAALVTIITVPIVLL) form a helical; Signal-anchor for type II membrane protein membrane-spanning segment. Topologically, residues 29–760 (SKDEAAADSR…HFLQQCFSLH (732 aa)) are extracellular. 7 N-linked (GlcNAc...) asparagine glycosylation sites follow: N83, N90, N144, N213, N223, N315, and N328. 4 disulfide bridges follow: C322-C333, C379-C388, C438-C441, and C448-C466. N-linked (GlcNAc...) asparagine glycosylation is present at N514. The active-site Charge relay system is S624. Cysteines 643 and 756 form a disulfide. N-linked (GlcNAc...) asparagine glycosylation is present at N679. Residues D702 and H734 each act as charge relay system in the active site.

It belongs to the peptidase S9B family. DPPIV subfamily. As to quaternary structure, monomer. Homodimer. Heterodimer with Seprase (FAP). Requires homodimerization for optimal dipeptidyl peptidase activity and T-cell costimulation. Found in a membrane raft complex, at least composed of BCL10, CARD11, DPP4 and IKBKB. Associates with collagen. Interacts with PTPRC; the interaction is enhanced in an interleukin-12-dependent manner in activated lymphocytes. Interacts (via extracellular domain) with ADA; does not inhibit its dipeptidyl peptidase activity. Interacts with CAV1 (via the N-terminus); the interaction is direct. Interacts (via cytoplasmic tail) with CARD11 (via PDZ domain); its homodimerization is necessary for interaction with CARD11. Interacts with IGF2R; the interaction is direct. Interacts with GPC3. Post-translationally, the soluble form (Dipeptidyl peptidase 4 soluble form also named SDPP) derives from the membrane form (Dipeptidyl peptidase 4 membrane form also named MDPP) by proteolytic processing. N- and O-Glycosylated. In terms of processing, phosphorylated. Mannose 6-phosphate residues in the carbohydrate moiety are necessary for interaction with IGF2R in activated T-cells. Mannose 6-phosphorylation is induced during T-cell activation.

It is found in the secreted. The protein resides in the cell membrane. It localises to the apical cell membrane. The protein localises to the cell projection. Its subcellular location is the invadopodium membrane. It is found in the lamellipodium membrane. The protein resides in the cell junction. It localises to the membrane raft. It carries out the reaction Release of an N-terminal dipeptide, Xaa-Yaa-|-Zaa-, from a polypeptide, preferentially when Yaa is Pro, provided Zaa is neither Pro nor hydroxyproline.. With respect to regulation, inhibited by GPC3 and diprotin A. Functionally, cell surface glycoprotein receptor involved in the costimulatory signal essential for T-cell receptor (TCR)-mediated T-cell activation. Acts as a positive regulator of T-cell coactivation, by binding at least ADA, CAV1, IGF2R, and PTPRC. Its binding to CAV1 and CARD11 induces T-cell proliferation and NF-kappa-B activation in a T-cell receptor/CD3-dependent manner. Its interaction with ADA also regulates lymphocyte-epithelial cell adhesion. In association with FAP is involved in the pericellular proteolysis of the extracellular matrix (ECM), the migration and invasion of endothelial cells into the ECM. May be involved in the promotion of lymphatic endothelial cells adhesion, migration and tube formation. When overexpressed, enhanced cell proliferation, a process inhibited by GPC3. Also acts as a serine exopeptidase with a dipeptidyl peptidase activity that regulates various physiological processes by cleaving peptides in the circulation, including many chemokines, mitogenic growth factors, neuropeptides and peptide hormones. Removes N-terminal dipeptides sequentially from polypeptides having unsubstituted N-termini provided that the penultimate residue is proline. The polypeptide is Dipeptidyl peptidase 4 (Dpp4) (Mus musculus (Mouse)).